A 631-amino-acid polypeptide reads, in one-letter code: tRNA 5-methylaminomethyl-2-thiouridine biosynthesis bifunctional protein MnmC (631 aa).

Residues methionine 1–proline 243 form a tRNA (mnm(5)s(2)U34)-methyltransferase region. The interval isoleucine 261–valine 631 is FAD-dependent cmnm(5)s(2)U34 oxidoreductase.

It in the N-terminal section; belongs to the methyltransferase superfamily. tRNA (mnm(5)s(2)U34)-methyltransferase family. The protein in the C-terminal section; belongs to the DAO family. FAD serves as cofactor.

Its subcellular location is the cytoplasm. The enzyme catalyses 5-aminomethyl-2-thiouridine(34) in tRNA + S-adenosyl-L-methionine = 5-methylaminomethyl-2-thiouridine(34) in tRNA + S-adenosyl-L-homocysteine + H(+). Catalyzes the last two steps in the biosynthesis of 5-methylaminomethyl-2-thiouridine (mnm(5)s(2)U) at the wobble position (U34) in tRNA. Catalyzes the FAD-dependent demodification of cmnm(5)s(2)U34 to nm(5)s(2)U34, followed by the transfer of a methyl group from S-adenosyl-L-methionine to nm(5)s(2)U34, to form mnm(5)s(2)U34. This is tRNA 5-methylaminomethyl-2-thiouridine biosynthesis bifunctional protein MnmC from Marinobacter nauticus (strain ATCC 700491 / DSM 11845 / VT8) (Marinobacter aquaeolei).